Here is a 182-residue protein sequence, read N- to C-terminus: Small ribosomal subunit protein uS5 (182 aa).

An S5 DRBM domain is found at Phe16–Val79.

This sequence belongs to the universal ribosomal protein uS5 family. In terms of assembly, part of the 30S ribosomal subunit. Contacts proteins S4 and S8.

With S4 and S12 plays an important role in translational accuracy. Functionally, located at the back of the 30S subunit body where it stabilizes the conformation of the head with respect to the body. This chain is Small ribosomal subunit protein uS5, found in Bartonella henselae (strain ATCC 49882 / DSM 28221 / CCUG 30454 / Houston 1) (Rochalimaea henselae).